The chain runs to 339 residues: Annexin A2 (339 aa).

The residue at position 2 (Ser-2) is an N-acetylserine. The interval 2–24 is S100A10-binding site; it reads STVHEILSKLSLEGDHSLPPSAY. The residue at position 24 (Tyr-24) is a Phosphotyrosine; by SRC. The residue at position 26 (Thr-26) is a Phosphothreonine; by PKC. Annexin repeat units lie at residues 33-104, 105-176, 189-261, and 265-336; these read FDAD…GLLK, TPSQ…ALAK, ELID…NLVQ, and NKQL…NLCG.

This sequence belongs to the annexin family. Heterotetramer containing 2 light chains of S100A10/p11 and 2 heavy chains of ANXA2/p36.

The protein resides in the secreted. Its subcellular location is the extracellular space. It localises to the extracellular matrix. It is found in the basement membrane. Its function is as follows. Calcium-regulated membrane-binding protein whose affinity for calcium is greatly enhanced by anionic phospholipids. It binds two calcium ions with high affinity. This chain is Annexin A2 (ANXA2), found in Gallus gallus (Chicken).